Reading from the N-terminus, the 382-residue chain is Lipid-A-disaccharide synthase (382 aa).

Belongs to the LpxB family.

The enzyme catalyses 2-N,3-O-bis[(3R)-3-hydroxytetradecanoyl]-alpha-D-glucosaminyl 1-phosphate + UDP-2-N,3-O-bis[(3R)-3-hydroxytetradecanoyl]-alpha-D-glucosamine = lipid A disaccharide (E. coli) + UDP + H(+). It catalyses the reaction a lipid X + a UDP-2-N,3-O-bis[(3R)-3-hydroxyacyl]-alpha-D-glucosamine = a lipid A disaccharide + UDP + H(+). Its pathway is glycolipid biosynthesis; lipid IV(A) biosynthesis; lipid IV(A) from (3R)-3-hydroxytetradecanoyl-[acyl-carrier-protein] and UDP-N-acetyl-alpha-D-glucosamine: step 5/6. Condensation of UDP-2,3-diacylglucosamine and 2,3-diacylglucosamine-1-phosphate to form lipid A disaccharide, a precursor of lipid A, a phosphorylated glycolipid that anchors the lipopolysaccharide to the outer membrane of the cell. In Shigella flexneri, this protein is Lipid-A-disaccharide synthase.